A 540-amino-acid polypeptide reads, in one-letter code: Chaperonin GroEL 1 (540 aa).

ATP is bound by residues 29 to 32, 86 to 90, glycine 415, 479 to 481, and aspartate 495; these read TIGP, DGTTT, and NAA.

Belongs to the chaperonin (HSP60) family. In terms of assembly, forms a cylinder of 14 subunits composed of two heptameric rings stacked back-to-back. Interacts with the co-chaperonin GroES.

It localises to the cytoplasm. It carries out the reaction ATP + H2O + a folded polypeptide = ADP + phosphate + an unfolded polypeptide.. Together with its co-chaperonin GroES, plays an essential role in assisting protein folding. The GroEL-GroES system forms a nano-cage that allows encapsulation of the non-native substrate proteins and provides a physical environment optimized to promote and accelerate protein folding. The sequence is that of Chaperonin GroEL 1 from Streptomyces albus G.